Here is a 432-residue protein sequence, read N- to C-terminus: Adenylosuccinate synthetase (432 aa).

GTP is bound by residues 13–19 (GDEGKGK) and 41–43 (GHT). D14 functions as the Proton acceptor in the catalytic mechanism. Mg(2+)-binding residues include D14 and G41. IMP is bound by residues 14 to 17 (DEGK), 39 to 42 (NAGH), T130, R144, Q225, T240, and R304. Catalysis depends on H42, which acts as the Proton donor. 300–306 (ATTGRRR) is a substrate binding site. Residues R306, 332 to 334 (KLD), and 415 to 417 (STG) each bind GTP.

This sequence belongs to the adenylosuccinate synthetase family. As to quaternary structure, homodimer. Requires Mg(2+) as cofactor.

Its subcellular location is the cytoplasm. It carries out the reaction IMP + L-aspartate + GTP = N(6)-(1,2-dicarboxyethyl)-AMP + GDP + phosphate + 2 H(+). The protein operates within purine metabolism; AMP biosynthesis via de novo pathway; AMP from IMP: step 1/2. In terms of biological role, plays an important role in the de novo pathway of purine nucleotide biosynthesis. Catalyzes the first committed step in the biosynthesis of AMP from IMP. This Salmonella agona (strain SL483) protein is Adenylosuccinate synthetase.